The following is an 80-amino-acid chain: uncharacterized protein (80 aa).

2 consecutive transmembrane segments (helical) span residues 15–35 (ALGLTLLYLAVWLVAAYLSGV) and 45–65 (WFEMACILTPLLFIGLCWAMV).

To H.influenzae HI_0974B.

The protein resides in the cell membrane. This is an uncharacterized protein from Escherichia coli (strain K12).